The chain runs to 641 residues: ATP-dependent zinc metalloprotease FtsH 2 (641 aa).

Over 1–100 (MLAYYVSVNQ…IDVKVIHNFW (100 aa)) the chain is Periplasmic. The chain crosses the membrane as a helical span at residues 101 to 121 (GQAFLSVLPFLLFILALYFLF). Over 122–641 (RQQIRMAGRG…LLPGLEGAPA (520 aa)) the chain is Cytoplasmic. Position 193-200 (193-200 (GPPGTGKT)) interacts with ATP. Position 415 (His-415) interacts with Zn(2+). The active site involves Glu-416. His-419 and Asp-491 together coordinate Zn(2+). The interval 593-641 (KTGKMTNPPSKNSSPVSNGGEASSTKSPARQEETTKDGGLLPGLEGAPA) is disordered. Composition is skewed to low complexity over residues 599–610 (NPPSKNSSPVSN) and 630–641 (GGLLPGLEGAPA).

In the central section; belongs to the AAA ATPase family. The protein in the C-terminal section; belongs to the peptidase M41 family. In terms of assembly, homohexamer. Zn(2+) serves as cofactor.

It is found in the cell inner membrane. Functionally, acts as a processive, ATP-dependent zinc metallopeptidase for both cytoplasmic and membrane proteins. Plays a role in the quality control of integral membrane proteins. The protein is ATP-dependent zinc metalloprotease FtsH 2 of Methylacidiphilum infernorum (isolate V4) (Methylokorus infernorum (strain V4)).